A 564-amino-acid chain; its full sequence is Proline--tRNA ligase (564 aa).

The protein belongs to the class-II aminoacyl-tRNA synthetase family. ProS type 1 subfamily. Homodimer.

It localises to the cytoplasm. It catalyses the reaction tRNA(Pro) + L-proline + ATP = L-prolyl-tRNA(Pro) + AMP + diphosphate. Its function is as follows. Catalyzes the attachment of proline to tRNA(Pro) in a two-step reaction: proline is first activated by ATP to form Pro-AMP and then transferred to the acceptor end of tRNA(Pro). As ProRS can inadvertently accommodate and process non-cognate amino acids such as alanine and cysteine, to avoid such errors it has two additional distinct editing activities against alanine. One activity is designated as 'pretransfer' editing and involves the tRNA(Pro)-independent hydrolysis of activated Ala-AMP. The other activity is designated 'posttransfer' editing and involves deacylation of mischarged Ala-tRNA(Pro). The misacylated Cys-tRNA(Pro) is not edited by ProRS. The sequence is that of Proline--tRNA ligase from Sulfurihydrogenibium sp. (strain YO3AOP1).